The following is a 462-amino-acid chain: Gastric inhibitory polypeptide receptor (462 aa).

Positions 1–18 (MPLRPRLLLLCLWGLLLQ) are cleaved as a signal peptide. Residues 19-135 (QAETDSEGQT…DQRLILERLQ (117 aa)) lie on the Extracellular side of the membrane. Cystine bridges form between Cys-43–Cys-67, Cys-58–Cys-100, and Cys-81–Cys-115. N-linked (GlcNAc...) asparagine glycosylation is found at Asn-59 and Asn-74. A helical membrane pass occupies residues 136-158 (VVYTVGYSLSLGTLLLALLILSL). Over 159–166 (FRRLHCTR) the chain is Cytoplasmic. A helical transmembrane segment spans residues 167-186 (NYIHMNVFLSFMLRAVAILT). Residues 187–214 (RDRLLPTLGPYPGDRTLTLRNQALAACR) lie on the Extracellular side of the membrane. Residues 215 to 239 (TAQIVTQYCVGANYTWLLVEGVYLH) traverse the membrane as a helical segment. Residues 240–251 (HLLVIVGGSEKG) are Cytoplasmic-facing. The chain crosses the membrane as a helical span at residues 252–275 (HFRCYLLLGWGAPALFVIPWVIVR). Residues 276–290 (YLLENTQCWERNEVK) are Extracellular-facing. The helical transmembrane segment at 291-316 (AIWWIIRTPILITILINFFIFIRILG) threads the bilayer. Over 317 to 338 (ILVSKLRTRQMRCPDYRLRLAR) the chain is Cytoplasmic. Residues 339–359 (STLTLVPLLGVHEVVFAPVTE) traverse the membrane as a helical segment. At 360-374 (EQAEGTLRFAKLAFE) the chain is on the extracellular side. The chain crosses the membrane as a helical span at residues 375-395 (IFLSSFQGFLVSVLYCFINKE). At 396-462 (VQSEIRRSWR…PGEEVLESYC (67 aa)) the chain is on the cytoplasmic side. The disordered stretch occupies residues 421–462 (HAELGPQALPSRSAPREVPITGSTLPSGPLHGPGEEVLESYC).

The protein belongs to the G-protein coupled receptor 2 family. May form homodimers and heterodimers with GLP1R. N-glycosylation is required for cell surface expression and lengthens receptor half-life by preventing degradation in the ER. Widely distributed including pancreatic islets, brain and various peripheral tissues.

Its subcellular location is the cell membrane. Functionally, this is a receptor for GIP. The activity of this receptor is mediated by G proteins which activate adenylyl cyclase. The sequence is that of Gastric inhibitory polypeptide receptor (GIPR) from Mesocricetus auratus (Golden hamster).